The sequence spans 308 residues: Prephenate dehydratase (308 aa).

The 185-residue stretch at 3-187 (RITYLGPEGT…AHTRFVLVGR (185 aa)) folds into the Prephenate dehydratase domain. The region spanning 201-278 (SVVLGLGNVP…EDVRYLGSWP (78 aa)) is the ACT domain.

As to quaternary structure, homodimer.

It carries out the reaction prephenate + H(+) = 3-phenylpyruvate + CO2 + H2O. It functions in the pathway amino-acid biosynthesis; L-phenylalanine biosynthesis; phenylpyruvate from prephenate: step 1/1. The polypeptide is Prephenate dehydratase (pheA) (Mycobacteroides abscessus (strain ATCC 19977 / DSM 44196 / CCUG 20993 / CIP 104536 / JCM 13569 / NCTC 13031 / TMC 1543 / L948) (Mycobacterium abscessus)).